Reading from the N-terminus, the 100-residue chain is uncharacterized protein (100 aa).

Residues 78–100 are disordered; the sequence is KPYRTESGTSSSNRMMLPPRQHV.

This is an uncharacterized protein from Caenorhabditis elegans.